The sequence spans 384 residues: S-adenosylmethionine synthase (384 aa).

Residue His15 participates in ATP binding. Asp17 contacts Mg(2+). Glu43 provides a ligand contact to K(+). Positions 56 and 99 each coordinate L-methionine. The segment at 99 to 109 is flexible loop; it reads QSSDINQGVDR. Residues 164 to 166, 230 to 231, Asp239, 245 to 246, Ala262, and Lys266 contribute to the ATP site; these read DAK, RF, and RK. Residue Asp239 coordinates L-methionine. Lys270 contacts L-methionine.

The protein belongs to the AdoMet synthase family. Homotetramer; dimer of dimers. Mg(2+) is required as a cofactor. K(+) serves as cofactor.

The protein resides in the cytoplasm. It carries out the reaction L-methionine + ATP + H2O = S-adenosyl-L-methionine + phosphate + diphosphate. It participates in amino-acid biosynthesis; S-adenosyl-L-methionine biosynthesis; S-adenosyl-L-methionine from L-methionine: step 1/1. Its function is as follows. Catalyzes the formation of S-adenosylmethionine (AdoMet) from methionine and ATP. The overall synthetic reaction is composed of two sequential steps, AdoMet formation and the subsequent tripolyphosphate hydrolysis which occurs prior to release of AdoMet from the enzyme. The protein is S-adenosylmethionine synthase of Histophilus somni (strain 129Pt) (Haemophilus somnus).